Here is a 782-residue protein sequence, read N- to C-terminus: Zinc finger Y-chromosomal protein 1 (782 aa).

2 disordered regions span residues 211 to 233 and 360 to 386; these read ADLEGSSEVTMNAESGTDSSKLD and LNQDESGGLDRVPKQKSKKKKRPESKQ. The segment covering 217-229 has biased composition (polar residues); the sequence is SEVTMNAESGTDS. A Nuclear localization signal motif is present at residues 372–382; it reads PKQKSKKKKRP. A compositionally biased stretch (basic residues) spans 373 to 382; that stretch reads KQKSKKKKRP. 13 consecutive C2H2-type zinc fingers follow at residues 403 to 425, 434 to 456, 466 to 488, 497 to 520, 526 to 548, 554 to 577, 583 to 605, 611 to 634, 640 to 662, 668 to 691, 697 to 719, 725 to 748, and 754 to 777; these read YPCMFCGKKFKTKRFLKRHTKNH, YHCTECDYSTNKKISLHNHMESH, TECDDCRKNLSHAGTLCTHKTMH, CKCKFCDYETAEQTLLNHHLLVVH, HICGECGKGFRHPSALKKHIRVH, YECQYCEYKSADSSNLKTHIKSKH, LKCGICLLTFSDNKEAQQHAVLH, HQCSHCNHKSSNSSDLKRHIISVH, HKCDMCSKGFHRPSELKKHVATH, HQCRHCDFNSPDPFLLSHHILSAH, FKCKRCKKEFQQQCELQTHMKTH, YQCEYCEYSTKDASGFKRHVISIH, and HSCDFCKKGFRRPSEKNQHIMRHH.

It belongs to the krueppel C2H2-type zinc-finger protein family. ZFX/ZFY subfamily.

The protein resides in the nucleus. Its function is as follows. Probable transcriptional activator. Binds to the consensus sequence 5'-AGGCCY-3'. This is Zinc finger Y-chromosomal protein 1 (Zfy1) from Mus musculus (Mouse).